We begin with the raw amino-acid sequence, 230 residues long: Ubiquitin carboxyl-terminal hydrolase isozyme L3 (230 aa).

The region spanning 5–229 is the UCH catalytic domain; the sequence is RWLPLEANPE…LRFNAIALSA (225 aa). The interaction with ubiquitin stretch occupies residues 8-13; the sequence is PLEANP. The active-site Nucleophile is Cys-95. Residue Ser-130 is modified to Phosphoserine. Residues 152 to 159 form an interaction with ubiquitin. Crossover loop which restricts access of large ubiquitin adducts to the active site region; sequence AHEGQTEA. His-169 acts as the Proton donor in catalysis. Residues 219–224 form an interaction with ubiquitin region; it reads ELRFNA.

The protein belongs to the peptidase C12 family. As to quaternary structure, preferentially binds diubiquitin; the interaction does not hydrolyze diubiquitin but, in vitro, inhibits the hydrolyzing activity on other substrates.

It is found in the cytoplasm. The enzyme catalyses Thiol-dependent hydrolysis of ester, thioester, amide, peptide and isopeptide bonds formed by the C-terminal Gly of ubiquitin (a 76-residue protein attached to proteins as an intracellular targeting signal).. With respect to regulation, inhibited by monoubiquitin and diubiquitin. Deubiquitinating enzyme (DUB) that controls levels of cellular ubiquitin through processing of ubiquitin precursors and ubiquitinated proteins. Thiol protease that recognizes and hydrolyzes a peptide bond at the C-terminal glycine of either ubiquitin or NEDD8. Has a 10-fold preference for Arg and Lys at position P3''. Deubiquitinates ENAC in apical compartments, thereby regulating apical membrane recycling. Indirectly increases the phosphorylation of IGFIR, AKT and FOXO1 and promotes insulin-signaling and insulin-induced adipogenesis. Required for stress-response retinal, skeletal muscle and germ cell maintenance. May be involved in working memory. Can hydrolyze UBB(+1), a mutated form of ubiquitin which is not effectively degraded by the proteasome. This Bos taurus (Bovine) protein is Ubiquitin carboxyl-terminal hydrolase isozyme L3 (UCHL3).